A 617-amino-acid polypeptide reads, in one-letter code: Isopropyl malate synthase gloH (617 aa).

The Pyruvate carboxyltransferase domain occupies 47–325 (PIWLSTDLRD…ETGLDFSDLL (279 aa)).

It belongs to the alpha-IPM synthase/homocitrate synthase family. LeuA type 2 subfamily.

The enzyme catalyses 3-methyl-2-oxobutanoate + acetyl-CoA + H2O = (2S)-2-isopropylmalate + CoA + H(+). It participates in mycotoxin biosynthesis. 2-isopropylmalate synthase; part of the gene cluster that mediates the biosynthesis of pneumocandins, lipohexapeptides of the echinocandin family that prevent fungal cell wall formation by non-competitive inhibition of beta-1,3-glucan synthase. The 10,12-dimethylmyristoyl side chain is synthesized by the reducing polyketide synthase gloL/GLPKS4. The thioesterase gloN/GLHYD exclusively interacts with gloL/GLPKS4 to maintain turnover of the polyketide side chain. The 10R,12S-dimethylmyristic acid is then transferred to the first thiolation domain of the nonribosomal peptide synthetase gloA/GLNRPS4 by the acyl-AMP ligase gloD/GLligase, followed by its acylation to L-ornithine to trigger elongation of the cyclic hexapeptide. L-ornithine, 4R-hydroxyl-L-proline (generated from L-proline by the dioxygenase gloF/GLOXY2), 3S-hydroxyl-L-homotyrosine (generated by gloG/GLHtyB, gloH/GLHtyA, gloI/GLHtyC, gloJ/GLHtyD and hydroxylated at C-3 by the dioxygenase gloM/GLOXY1), 3R-hydroxyl-L-glutamine (generated from L-glutamine probably by the dioxygenase gloE/GLOXY3) and 3S-hydroxyl-L-proline (generated from L-proline by the dioxygenase gloF/GLOXY2 to yield pneumocandin B0), or 3S-hydroxyl-4S-methyl-L-proline (generated from L-leucine by the dioxygenase gloC/GLOXY4 to yield pneumocandin A0) are sequentially added to the growing chain. The last C domain of gloA/GLNRPS4 is proposed to be responsible for cyclization by condensation to form the peptide bond between L-ornithine and 3S-hydroxyl-4S-methyl-L-proline (for pneumocandin A0) or 3S-hydroxyl-L-proline (for pneumocandin B0). Finally, the subsequent C-4 hydroxylation of 3S-hydroxyl-L-homotyrosine and L-ornithine dihydroxylation at C-4 and C-5 are performed by the cytochrome P450 monooxygenases gloP/GLP450-1 and gloO/GLP450-2, respectively. The sequence is that of Isopropyl malate synthase gloH from Glarea lozoyensis (strain ATCC 20868 / MF5171).